A 322-amino-acid polypeptide reads, in one-letter code: NADH-quinone oxidoreductase subunit H (322 aa).

Transmembrane regions (helical) follow at residues 12–32 (IGKALIVLVGIVGAGAFMSFI), 79–99 (IFILAPIIAFTAFILAFAVVP), 111–131 (VGLLYILAIAGLAVYAVLFAG), 151–171 (LSYEVFLGLSLMGIVIQTGSF), 183–203 (LWNVVPQFLGFITFLFAGVAV), 234–254 (FFVGEYIGIVLISSLIVTLFF), 262–282 (LPPFFWFALKTACFMVFFILL), and 301–321 (VCLPLTLINMLITAAVVLMNV).

This sequence belongs to the complex I subunit 1 family. In terms of assembly, NDH-1 is composed of 13 different subunits. Subunits NuoA, H, J, K, L, M, N constitute the membrane sector of the complex.

Its subcellular location is the cell inner membrane. The enzyme catalyses a quinone + NADH + 5 H(+)(in) = a quinol + NAD(+) + 4 H(+)(out). NDH-1 shuttles electrons from NADH, via FMN and iron-sulfur (Fe-S) centers, to quinones in the respiratory chain. The immediate electron acceptor for the enzyme in this species is believed to be ubiquinone. Couples the redox reaction to proton translocation (for every two electrons transferred, four hydrogen ions are translocated across the cytoplasmic membrane), and thus conserves the redox energy in a proton gradient. This subunit may bind ubiquinone. In Shewanella oneidensis (strain ATCC 700550 / JCM 31522 / CIP 106686 / LMG 19005 / NCIMB 14063 / MR-1), this protein is NADH-quinone oxidoreductase subunit H.